We begin with the raw amino-acid sequence, 254 residues long: Pectate lyase E (254 aa).

An N-terminal signal peptide occupies residues 1–17; it reads MYQPLLLLPLLLTSAFA. The segment at 227-254 is disordered; the sequence is TNNNSKEPKKKSSGPSSYCKYSEPLSKC. An N-linked (GlcNAc...) asparagine glycan is attached at Asn-229. Low complexity predominate over residues 239–254; the sequence is SGPSSYCKYSEPLSKC.

Belongs to the polysaccharide lyase 3 family. Requires Ca(2+) as cofactor.

The protein resides in the secreted. The catalysed reaction is Eliminative cleavage of (1-&gt;4)-alpha-D-galacturonan to give oligosaccharides with 4-deoxy-alpha-D-galact-4-enuronosyl groups at their non-reducing ends.. Its function is as follows. Pectinolytic enzyme consist of four classes of enzymes: pectin lyase, polygalacturonase, pectin methylesterase and rhamnogalacturonase. Among pectinolytic enzymes, pectin lyase is the most important in depolymerization of pectin, since it cleaves internal glycosidic bonds of highly methylated pectins. Favors pectate, the anion, over pectin, the methyl ester. This Emericella nidulans (strain FGSC A4 / ATCC 38163 / CBS 112.46 / NRRL 194 / M139) (Aspergillus nidulans) protein is Pectate lyase E (plyE).